A 358-amino-acid polypeptide reads, in one-letter code: Phospho-N-acetylmuramoyl-pentapeptide-transferase (358 aa).

10 helical membrane-spanning segments follow: residues 3–23, 54–74, 84–104, 114–134, 156–176, 187–207, 231–251, 255–275, 283–303, and 330–350; these read QILFAAAIALTVSILLTPALI, GVAILIGMWAGYLGSHLIGIA, ALLVLGLATALGAVGFIDDFI, LTAAGKYLGQLTAAIVFGVLA, ITTVSMGVIVFLAFVSLVVVA, LDGLAAGSMSLVLGGYVIITF, LALVCAAGTAACIGFLWWNAA, IFMGDTGSLALGGLLAGLSIT, VVIGALFVAEAASVVLQVAVF, and VIIRFWLLAAMASAFGLGLFY.

It belongs to the glycosyltransferase 4 family. MraY subfamily. Requires Mg(2+) as cofactor.

The protein localises to the cell membrane. The catalysed reaction is UDP-N-acetyl-alpha-D-muramoyl-L-alanyl-gamma-D-glutamyl-meso-2,6-diaminopimeloyl-D-alanyl-D-alanine + di-trans,octa-cis-undecaprenyl phosphate = di-trans,octa-cis-undecaprenyl diphospho-N-acetyl-alpha-D-muramoyl-L-alanyl-D-glutamyl-meso-2,6-diaminopimeloyl-D-alanyl-D-alanine + UMP. Its pathway is cell wall biogenesis; peptidoglycan biosynthesis. Catalyzes the initial step of the lipid cycle reactions in the biosynthesis of the cell wall peptidoglycan: transfers peptidoglycan precursor phospho-MurNAc-pentapeptide from UDP-MurNAc-pentapeptide onto the lipid carrier undecaprenyl phosphate, yielding undecaprenyl-pyrophosphoryl-MurNAc-pentapeptide, known as lipid I. The sequence is that of Phospho-N-acetylmuramoyl-pentapeptide-transferase from Nocardia farcinica (strain IFM 10152).